The chain runs to 671 residues: DNA ligase (671 aa).

Residues aspartate 31–aspartate 35, serine 80–leucine 81, and glutamate 110 contribute to the NAD(+) site. The active-site N6-AMP-lysine intermediate is lysine 112. Residues arginine 133, glutamate 167, lysine 283, and lysine 307 each contribute to the NAD(+) site. 4 residues coordinate Zn(2+): cysteine 401, cysteine 404, cysteine 419, and cysteine 424. The region spanning glutamate 587–glutamate 671 is the BRCT domain.

The protein belongs to the NAD-dependent DNA ligase family. LigA subfamily. The cofactor is Mg(2+). Requires Mn(2+) as cofactor.

It carries out the reaction NAD(+) + (deoxyribonucleotide)n-3'-hydroxyl + 5'-phospho-(deoxyribonucleotide)m = (deoxyribonucleotide)n+m + AMP + beta-nicotinamide D-nucleotide.. In terms of biological role, DNA ligase that catalyzes the formation of phosphodiester linkages between 5'-phosphoryl and 3'-hydroxyl groups in double-stranded DNA using NAD as a coenzyme and as the energy source for the reaction. It is essential for DNA replication and repair of damaged DNA. The polypeptide is DNA ligase (Listeria monocytogenes serotype 4a (strain HCC23)).